Reading from the N-terminus, the 234-residue chain is Demethylmenaquinone methyltransferase (234 aa).

S-adenosyl-L-methionine contacts are provided by residues Thr-62, Asp-80, 100–101, and Ser-117; that span reads DA.

The protein belongs to the class I-like SAM-binding methyltransferase superfamily. MenG/UbiE family.

The catalysed reaction is a 2-demethylmenaquinol + S-adenosyl-L-methionine = a menaquinol + S-adenosyl-L-homocysteine + H(+). Its pathway is quinol/quinone metabolism; menaquinone biosynthesis; menaquinol from 1,4-dihydroxy-2-naphthoate: step 2/2. In terms of biological role, methyltransferase required for the conversion of demethylmenaquinol (DMKH2) to menaquinol (MKH2). This is Demethylmenaquinone methyltransferase from Mycobacterium bovis (strain ATCC BAA-935 / AF2122/97).